Here is a 1335-residue protein sequence, read N- to C-terminus: Mediator of RNA polymerase II transcription subunit 15a (1335 aa).

8 disordered regions span residues 1–27, 109–172, 190–225, 241–389, 401–448, 496–525, 567–591, and 683–815; these read MDNNNWRPSLPNGEPAMDTGDWRTQLP, GTSI…NNNT, QDSSGQHGLSSNMFSGPQRQMLGRPHAMSSQQQQQP, FQSG…QHQQ, IQQQ…TQSN, LYSSQGQQSQNQPSQQQMMPQLQSHHQQLG, SQRTLPEMPSSSLDSTAQTESANGG, and HRPR…QSNV. 3 stretches are compositionally biased toward polar residues: residues 110-158, 190-207, and 241-257; these read TSID…TALP, QDSSGQHGLSSNMFSGPQ, and FQSGNVPNPNSLLPSHI. Positions 258–270 are enriched in low complexity; the sequence is QQQQQNVLQPNQL. Positions 271–299 are enriched in polar residues; the sequence is HSSQQPGVPTSATQPSTVNSAPLQGLHTN. The span at 300–314 shows a compositional bias: low complexity; sequence QQSSPQLSSQQTTQS. Polar residues predominate over residues 315 to 328; it reads MLRQHQSSMLRQHP. Positions 329–362 are enriched in low complexity; it reads QSQQASGIHQQQSSLPQQSISPLQQQPTQLMRQQ. Positions 363–374 are enriched in polar residues; that stretch reads AANSSGIQQKQM. Residues 401–436 are compositionally biased toward low complexity; it reads IQQQQSQQQPLQQPQQQQKQQPPAQQQLMSQQNSLQ. Residues 437–448 are compositionally biased toward polar residues; the sequence is ATHQNPLGTQSN. Low complexity predominate over residues 498–525; it reads SSQGQQSQNQPSQQQMMPQLQSHHQQLG. Polar residues predominate over residues 567–588; the sequence is SQRTLPEMPSSSLDSTAQTESA. Over residues 688-712 the composition is skewed to low complexity; the sequence is PVQQGQLPQSQMQPMQQPQSQTVQD. Composition is skewed to polar residues over residues 716–728, 735–749, and 756–815; these read DNQTNPQMQSMSM, AQQSSMTNMQSNVLS, and APQQ…QSNV. Residues 834–882 adopt a coiled-coil conformation; that stretch reads QDQQMQLKQQFQQRQMQQQQLQARQQQQQQQLQARQQAAQLQQMNDMND. Disordered regions lie at residues 947 to 986 and 1146 to 1165; these read KMGTPLQPANSPFVVPSPSSTPLAPSPMQVDSEKPGSSSL and FAGSETSDLESTATSDGKKA. Residues 957–973 show a composition bias toward low complexity; it reads SPFVVPSPSSTPLAPSP. A compositionally biased stretch (polar residues) spans 1148–1160; it reads GSETSDLESTATS.

This sequence belongs to the plant Mediator complex subunit 15 family. Component of the Mediator complex.

It is found in the nucleus. Functionally, component of the Mediator complex, a coactivator involved in the regulated transcription of nearly all RNA polymerase II-dependent genes. Mediator functions as a bridge to convey information from gene-specific regulatory proteins to the basal RNA polymerase II transcription machinery. The Mediator complex, having a compact conformation in its free form, is recruited to promoters by direct interactions with regulatory proteins and serves for the assembly of a functional preinitiation complex with RNA polymerase II and the general transcription factors. This is Mediator of RNA polymerase II transcription subunit 15a (MED15A) from Arabidopsis thaliana (Mouse-ear cress).